Here is a 397-residue protein sequence, read N- to C-terminus: Succinate--CoA ligase [ADP-forming] subunit beta (397 aa).

An ATP-grasp domain is found at 9–254 (KALLRSYGAP…ETEEDPKELA (246 aa)). ATP is bound by residues Lys46, 53–55 (GRG), Glu109, Ser112, and Glu117. 2 residues coordinate Mg(2+): Asn209 and Asp223. Substrate is bound by residues Asn274 and 331–333 (GIM).

This sequence belongs to the succinate/malate CoA ligase beta subunit family. Heterotetramer of two alpha and two beta subunits. Mg(2+) is required as a cofactor.

The enzyme catalyses succinate + ATP + CoA = succinyl-CoA + ADP + phosphate. The catalysed reaction is GTP + succinate + CoA = succinyl-CoA + GDP + phosphate. It functions in the pathway carbohydrate metabolism; tricarboxylic acid cycle; succinate from succinyl-CoA (ligase route): step 1/1. In terms of biological role, succinyl-CoA synthetase functions in the citric acid cycle (TCA), coupling the hydrolysis of succinyl-CoA to the synthesis of either ATP or GTP and thus represents the only step of substrate-level phosphorylation in the TCA. The beta subunit provides nucleotide specificity of the enzyme and binds the substrate succinate, while the binding sites for coenzyme A and phosphate are found in the alpha subunit. This Cereibacter sphaeroides (strain ATCC 17025 / ATH 2.4.3) (Rhodobacter sphaeroides) protein is Succinate--CoA ligase [ADP-forming] subunit beta.